The sequence spans 218 residues: MIP18 family protein galla-1 (218 aa).

Positions 1 to 59 are disordered; sequence MLSYIKRKLSESDSGVSSVATVTSSCGGDSGRAGGTGSSESGTGSSSASISGRSQNADE. Low complexity predominate over residues 12 to 27; sequence SDSGVSSVATVTSSCG. Ser14 bears the Phosphoserine mark. The segment covering 28–37 has biased composition (gly residues); sequence GDSGRAGGTG. Over residues 38-54 the composition is skewed to low complexity; sequence SSESGTGSSSASISGRS. Phosphoserine is present on Ser65.

The protein belongs to the MIP18 family. In terms of assembly, component of the CGX complex composed of crb, galla (galla-1 or galla-2) and Xpd. Interacts with crb (via intracellular domain). Is not able to interact with Xpd in the absence of crb.

It localises to the apical cell membrane. Its subcellular location is the cytoplasm. The protein localises to the cytoskeleton. It is found in the spindle. Component of the crb-galla-Xpd (CGX) complex which is essential for proper mitotic chromosome segregation in early embryos. The CGX complex is also required for cell proliferation in developing wing disks. In the CGX complex, acts with crb to recruit Xpd thus forming the functional complex. This is MIP18 family protein galla-1 from Drosophila melanogaster (Fruit fly).